Reading from the N-terminus, the 116-residue chain is Holo-[acyl-carrier-protein] synthase (116 aa).

Residues Asp8 and Glu50 each coordinate Mg(2+).

Belongs to the P-Pant transferase superfamily. AcpS family. Requires Mg(2+) as cofactor.

Its subcellular location is the cytoplasm. The catalysed reaction is apo-[ACP] + CoA = holo-[ACP] + adenosine 3',5'-bisphosphate + H(+). Transfers the 4'-phosphopantetheine moiety from coenzyme A to a Ser of acyl-carrier-protein. The polypeptide is Holo-[acyl-carrier-protein] synthase (Beutenbergia cavernae (strain ATCC BAA-8 / DSM 12333 / CCUG 43141 / JCM 11478 / NBRC 16432 / NCIMB 13614 / HKI 0122)).